Reading from the N-terminus, the 126-residue chain is MSVVYKKKKRNVVVGVVYIHATYNNIIVTVTDQQGHSLICTSAGACGFKGSKKATPYAAQETASHAVKTVVEQNGMKTVSIKVSGPGAGRESAIRAVQACNLNVTSIKDTTKLPHNGCKLPGRRRV.

It belongs to the universal ribosomal protein uS11 family. In terms of assembly, part of the 30S ribosomal subunit. Interacts with proteins S7 and S18. Binds to IF-3.

In terms of biological role, located on the platform of the 30S subunit, it bridges several disparate RNA helices of the 16S rRNA. Forms part of the Shine-Dalgarno cleft in the 70S ribosome. The polypeptide is Small ribosomal subunit protein uS11 (Ehrlichia chaffeensis (strain ATCC CRL-10679 / Arkansas)).